Here is a 368-residue protein sequence, read N- to C-terminus: Mitogen-activated protein kinase HOG1B (368 aa).

The 280-residue stretch at 20 to 299 folds into the Protein kinase domain; that stretch reads YVNLEPVGMG…ASQALAHPYL (280 aa). ATP-binding positions include 26 to 34 and Lys49; that span reads VGMGAFGLV. Asp141 (proton acceptor) is an active-site residue. Thr171 carries the phosphothreonine modification. The TXY signature appears at 171 to 173; the sequence is TGY. Tyr173 carries the post-translational modification Phosphotyrosine.

This sequence belongs to the protein kinase superfamily. Ser/Thr protein kinase family. MAP kinase subfamily. HOG1 sub-subfamily. Mg(2+) serves as cofactor. In terms of processing, phosphorylated. Dually phosphorylated on Thr-171 and Tyr-173, which activates the enzyme. Rapidly dephosphorylated upon either hypo- or hyperosmotic shock.

It is found in the cytoplasm. The protein resides in the nucleus. It catalyses the reaction L-seryl-[protein] + ATP = O-phospho-L-seryl-[protein] + ADP + H(+). The enzyme catalyses L-threonyl-[protein] + ATP = O-phospho-L-threonyl-[protein] + ADP + H(+). Activated by tyrosine and threonine phosphorylation. In terms of biological role, mitogen-activated protein kinase involved in a signal transduction pathway that is activated by changes in the osmolarity of the extracellular environment. Controls osmotic regulation of transcription of target genes. This Wallemia ichthyophaga (strain EXF-994 / CBS 113033) protein is Mitogen-activated protein kinase HOG1B (HOG1B).